A 1004-amino-acid polypeptide reads, in one-letter code: DNA-directed RNA polymerase subunit beta' (1004 aa).

The Mg(2+) site is built by Asp388, Asp390, and Asp392. Zn(2+) is bound by residues Cys757, Cys831, Cys838, and Cys841.

It belongs to the RNA polymerase beta' chain family. In terms of assembly, the RNAP catalytic core consists of 2 alpha, 1 beta, 1 beta' and 1 omega subunit. When a sigma factor is associated with the core the holoenzyme is formed, which can initiate transcription. Mg(2+) serves as cofactor. Zn(2+) is required as a cofactor.

It catalyses the reaction RNA(n) + a ribonucleoside 5'-triphosphate = RNA(n+1) + diphosphate. DNA-dependent RNA polymerase catalyzes the transcription of DNA into RNA using the four ribonucleoside triphosphates as substrates. This chain is DNA-directed RNA polymerase subunit beta', found in Oenococcus oeni (Leuconostoc oenos).